The primary structure comprises 306 residues: Acetyl-coenzyme A carboxylase carboxyl transferase subunit beta (306 aa).

One can recognise a CoA carboxyltransferase N-terminal domain in the interval 27–296 (LWHKCPSCEA…PRFVAPVIEP (270 aa)). Residues Cys31, Cys34, Cys50, and Cys53 each coordinate Zn(2+). Residues 31-53 (CPSCEAVLYRPELEKTLDVCPKC) form a C4-type zinc finger.

It belongs to the AccD/PCCB family. Acetyl-CoA carboxylase is a heterohexamer composed of biotin carboxyl carrier protein (AccB), biotin carboxylase (AccC) and two subunits each of ACCase subunit alpha (AccA) and ACCase subunit beta (AccD). The cofactor is Zn(2+).

The protein localises to the cytoplasm. The enzyme catalyses N(6)-carboxybiotinyl-L-lysyl-[protein] + acetyl-CoA = N(6)-biotinyl-L-lysyl-[protein] + malonyl-CoA. Its pathway is lipid metabolism; malonyl-CoA biosynthesis; malonyl-CoA from acetyl-CoA: step 1/1. Functionally, component of the acetyl coenzyme A carboxylase (ACC) complex. Biotin carboxylase (BC) catalyzes the carboxylation of biotin on its carrier protein (BCCP) and then the CO(2) group is transferred by the transcarboxylase to acetyl-CoA to form malonyl-CoA. This is Acetyl-coenzyme A carboxylase carboxyl transferase subunit beta from Pseudomonas savastanoi pv. phaseolicola (strain 1448A / Race 6) (Pseudomonas syringae pv. phaseolicola (strain 1448A / Race 6)).